Consider the following 247-residue polypeptide: Eukaryotic translation initiation factor 6 (247 aa).

2 positions are modified to phosphoserine; by CK1: serine 174 and serine 175.

This sequence belongs to the eIF-6 family. Monomer. Associates with the 60S ribosomal subunit. Phosphorylation at Ser-174 and Ser-175 promotes nuclear export.

It localises to the cytoplasm. The protein resides in the nucleus. The protein localises to the nucleolus. In terms of biological role, binds to the 60S ribosomal subunit and prevents its association with the 40S ribosomal subunit to form the 80S initiation complex in the cytoplasm. Is also involved in ribosome biogenesis. Associates with pre-60S subunits in the nucleus and is involved in its nuclear export. This chain is Eukaryotic translation initiation factor 6 (tif6), found in Aspergillus oryzae (strain ATCC 42149 / RIB 40) (Yellow koji mold).